Consider the following 132-residue polypeptide: Fertilization-influencing membrane protein (132 aa).

A helical transmembrane segment spans residues 100–120 (PGLFHHILVGLLVVAFFFLLF).

Testis-specific.

The protein localises to the cell membrane. Functionally, may play a role in sperm-oocyte fusion during fertilization. The protein is Fertilization-influencing membrane protein of Homo sapiens (Human).